The following is a 515-amino-acid chain: E3 ubiquitin-protein ligase RNF217 (515 aa).

2 disordered regions span residues 1–125 (MGEE…VLAQ) and 147–189 (PEAP…ADPL). A compositionally biased stretch (gly residues) spans 10–22 (GSGGARASGGGSA). 2 stretches are compositionally biased toward low complexity: residues 39–49 (GPRAAASSSRP) and 147–157 (PEAPSAESPSP). The segment covering 158-178 (SESPPQAPLGPIPASPPPSFP) has biased composition (pro residues). Low complexity predominate over residues 179–189 (SSPLSLPADPL). A TRIAD supradomain region spans residues 232 to 451 (MVLMCRVCLE…LSIFGCKYRY (220 aa)). 10 residues coordinate Zn(2+): cysteine 236, cysteine 239, cysteine 256, cysteine 259, cysteine 356, cysteine 359, histidine 364, cysteine 369, cysteine 396, and cysteine 399. An RING-type 1 zinc finger spans residues 236–282 (CRVCLEDKPIKPLPCCKKAVCEECLKIYLSSQVQLGQVEIKCPVTEC). An IBR-type zinc finger spans residues 301–369 (IKYKYFLELG…HSPWHEGVNC (69 aa)). The segment at 396 to 425 (CPKCKIHIQRTEGCDHMTCSQCNTNFCYRC) adopts an RING-type 2; atypical zinc-finger fold. The active site involves cysteine 409. Positions 414, 417, 422, 425, 438, and 447 each coordinate Zn(2+). Residues 476 to 496 (LILVLGLALGAIAVVIGLFVF) traverse the membrane as a helical segment.

The protein belongs to the RBR family. RNF217 subfamily. As to quaternary structure, interacts with HAX1.

It localises to the membrane. Its subcellular location is the cytoplasm. It catalyses the reaction [E2 ubiquitin-conjugating enzyme]-S-ubiquitinyl-L-cysteine + [acceptor protein]-L-lysine = [E2 ubiquitin-conjugating enzyme]-L-cysteine + [acceptor protein]-N(6)-ubiquitinyl-L-lysine.. Its pathway is protein modification; protein ubiquitination. E3 ubiquitin-protein ligase which accepts ubiquitin from E2 ubiquitin-conjugating enzymes in the form of a thioester and then directly transfers the ubiquitin to targeted substrates. Mediates the degradation of the iron exporter ferroportin/SLC40A1 and thus regulates iron homeostasis. The sequence is that of E3 ubiquitin-protein ligase RNF217 (Rnf217) from Mus musculus (Mouse).